We begin with the raw amino-acid sequence, 446 residues long: DDB1- and CUL4-associated factor 12 (446 aa).

The segment covering 1-12 (MTRRAVSRKRRA) has biased composition (basic residues). The segment at 1-33 (MTRRAVSRKRRAAPGTGPGEQSDWDHSAHKRKR) is disordered. WD repeat units follow at residues 132-173 (SHQS…PVCV), 177-215 (GHND…LSKS), 245-284 (PVNC…AKLL), and 333-370 (EQGS…FLED).

Belongs to the WD repeat DCAF12 family. In terms of assembly, component of the DCX(DCAF12) E3 ubiquitin ligase complex, at least composed of cul4 (cul4a or cul4b), ddb1, dcaf12 and rbx1.

It is found in the cytoplasm. Its subcellular location is the cytoskeleton. The protein localises to the microtubule organizing center. It localises to the centrosome. The protein resides in the nucleus. Its pathway is protein modification; protein ubiquitination. Its function is as follows. Substrate-recognition component of a DCX (DDB1-CUL4-X-box) E3 ubiquitin-protein ligase complex of the DesCEND (destruction via C-end degrons) pathway, which recognizes a C-degron located at the extreme C terminus of target proteins, leading to their ubiquitination and degradation. The C-degron recognized by the DesCEND pathway is usually a motif of less than ten residues and can be present in full-length proteins, truncated proteins or proteolytically cleaved forms. The DCX(DCAF12) complex specifically recognizes proteins with a diglutamate (Glu-Glu) at the C-terminus leading to their ubiquitination and degradation. Also directly recognizes the C-terminal glutamate-leucine (Glu-Leu) degron as an alternative degron in proteins leading to their ubiquitination and degradation. The protein is DDB1- and CUL4-associated factor 12 of Xenopus tropicalis (Western clawed frog).